A 1039-amino-acid polypeptide reads, in one-letter code: uncharacterized protein (1039 aa).

Over residues 1–19 (MSLLMAHRKSKSSQRKLRN) the composition is skewed to basic residues. Positions 1–38 (MSLLMAHRKSKSSQRKLRNRSSSLTPQKRRIRASKGSH) are disordered.

This is an uncharacterized protein from Sinorhizobium fredii (strain NBRC 101917 / NGR234).